Reading from the N-terminus, the 95-residue chain is RING finger protein Z (95 aa).

The N-myristoyl glycine; by host moiety is linked to residue G2. The RING-type; atypical zinc finger occupies 38-74 (CKRCWFATKGLIACSDHYLCLNCLTIMLSDGNFCEVC). The PTAP/PSAP motif signature appears at 88–91 (PSAP).

This sequence belongs to the arenaviridae Z protein family. In terms of assembly, interacts with protein NP; this interaction probably directs the encapsidated genome to budding sites. Interacts (via RING domain) with polymerase L; this interaction inhibits viral transcription and replication, Z partially blocks the product exit tunnel for the releasing nascent RNA product. Interacts with the glycoprotein complex; this interaction plays a role in virion budding. Interacts with host eIF4E; this interaction results in eIF4E reduced affinity for its substrate, the 5'-m7 G cap structure. Interacts (via late-budding domain) with host TSG101; this interaction is essential for budding and release of viral particles. Interacts with host RPLP0; this interaction may serve to load ribosome-like particles inside the virion. Interacts with host PML; this interaction induces PML bodies redistribution in the cytoplasm upon viral infection. Post-translationally, myristoylation is required for the role of RING finger protein Z in assembly and budding.

It is found in the virion. Its subcellular location is the host cytoplasm. The protein resides in the host perinuclear region. The protein localises to the host cell membrane. Functionally, plays a crucial role in virion assembly and budding. Expressed late in the virus life cycle, it acts as an inhibitor of viral transcription and RNA synthesis by interacting with the viral polymerase L. Presumably recruits the NP encapsidated genome to cellular membranes at budding sites via direct interaction with NP. Plays critical roles in the final steps of viral release by interacting with host TSG101, a member of the vacuolar protein-sorting pathway and using other cellular host proteins involved in vesicle formation pathway. The budding of the virus progeny occurs after association of protein Z with the viral glycoprotein complex SSP-GP1-GP2 at the cell periphery, step that requires myristoylation of protein Z. Also selectively represses protein production by associating with host eIF4E. In cell-based minigenome assay, has an inhibitory effect on the ribonucleoprotein machinery (vRNP), which is responsible for the replication and transcription of the viral genome. The protein is RING finger protein Z of Sooretamys angouya (Paraguayan rice rat).